A 526-amino-acid chain; its full sequence is Tyrosine-protein kinase transforming protein Src (526 aa).

Positions 1–15 (MGSSKSKPKGPSQRR) are enriched in basic residues. Residues 1–59 (MGSSKSKPKGPSQRRRSLEPPDSTHHGGFPASQTPNKTAAPDTHRTPSRSFGTVATEPK) are disordered. A lipid anchor (N-myristoyl glycine; by host) is attached at Gly2. Residues 16-25 (RSLEPPDSTH) show a composition bias toward basic and acidic residues. Positions 81 to 142 (GGVTTFVALY…PSNYVAPSDS (62 aa)) constitute an SH3 domain. One can recognise an SH2 domain in the interval 148 to 245 (WYFGKITRRE…GLCHRLTNVC (98 aa)). One can recognise a Protein kinase domain in the interval 267–517 (LRLEVKLGQG…TFEYLQAQLL (251 aa)). ATP contacts are provided by residues 273-281 (LGQGCFGEV) and Lys295. Asp386 functions as the Proton acceptor in the catalytic mechanism. Tyr416 carries the phosphotyrosine; by autocatalysis modification.

It belongs to the protein kinase superfamily. Tyr protein kinase family. SRC subfamily. As to quaternary structure, homodimer. Post-translationally, the phosphorylated form is termed pp60v-src.

It carries out the reaction L-tyrosyl-[protein] + ATP = O-phospho-L-tyrosyl-[protein] + ADP + H(+). In terms of biological role, this phosphoprotein, required for both the initiation and the maintenance of neoplastic transformation, is a protein kinase that catalyzes the phosphorylation of tyrosine residues in vitro. The protein is Tyrosine-protein kinase transforming protein Src (V-SRC) of Rous sarcoma virus subgroup E (strain Schmidt-Ruppin) (RSV-SR-E).